The primary structure comprises 267 residues: MYLELVKKKSDILDKDGNRIKEVELPIIFSFPVRKDLIRRVFIAEFTHSLQPKGRDPNAGKRTSAESFGINLGMARVPRVKNSGEAALAPNTVGGRLAFPPSVNKKLAEEANVKEKRLAVISALSATADIAFVRARGHVFKDSVRFPIVVTDDIVNLKTTSEVEEFLKKIGVYDDVERVKERIRIRAGKGKMRGRKYKEPIGPLIIVHDSNSPIIKAARNLAGVDVVNAKDVSVIHLAPGAHPGRLTIYTESSIKILDERLSKRVVS.

This sequence belongs to the universal ribosomal protein uL4 family. Part of the 50S ribosomal subunit.

One of the primary rRNA binding proteins, this protein initially binds near the 5'-end of the 23S rRNA. It is important during the early stages of 50S assembly. It makes multiple contacts with different domains of the 23S rRNA in the assembled 50S subunit and ribosome. Functionally, forms part of the polypeptide exit tunnel. This chain is Large ribosomal subunit protein uL4, found in Saccharolobus solfataricus (strain ATCC 35092 / DSM 1617 / JCM 11322 / P2) (Sulfolobus solfataricus).